Reading from the N-terminus, the 595-residue chain is Aspartate--tRNA ligase (595 aa).

E171 lines the L-aspartate pocket. The tract at residues 195-198 is aspartate; it reads QLFK. R217 is a binding site for L-aspartate. Residues 217–219 and Q226 contribute to the ATP site; that span reads RDE. H448 contacts L-aspartate. Position 482 (E482) interacts with ATP. R489 is a binding site for L-aspartate. Residue 534–537 participates in ATP binding; that stretch reads GLDR.

It belongs to the class-II aminoacyl-tRNA synthetase family. Type 1 subfamily. As to quaternary structure, homodimer.

The protein resides in the cytoplasm. It catalyses the reaction tRNA(Asp) + L-aspartate + ATP = L-aspartyl-tRNA(Asp) + AMP + diphosphate. Its function is as follows. Catalyzes the attachment of L-aspartate to tRNA(Asp) in a two-step reaction: L-aspartate is first activated by ATP to form Asp-AMP and then transferred to the acceptor end of tRNA(Asp). This chain is Aspartate--tRNA ligase, found in Erwinia tasmaniensis (strain DSM 17950 / CFBP 7177 / CIP 109463 / NCPPB 4357 / Et1/99).